The sequence spans 509 residues: Zinc finger protein Aiolos (509 aa).

Residues 1 to 19 (MEDIQTNAELKSTQEQSVP) show a composition bias toward polar residues. A disordered region spans residues 1–86 (MEDIQTNAEL…MGNAEEPEIP (86 aa)). A phosphoserine mark is found at Ser-22 and Ser-42. Basic and acidic residues predominate over residues 56–72 (DSMKVKDEYSERDENVL). Residues Lys-61, Lys-73, and Lys-100 each participate in a glycyl lysine isopeptide (Lys-Gly) (interchain with G-Cter in SUMO2) cross-link. 3 C2H2-type zinc fingers span residues 118–140 (MNCD…KRSH), 146–168 (FQCN…IKLH), and 174–196 (FKCH…LRTH). The C2H2-type 4; atypical zinc-finger motif lies at 202–224 (YKCEFCGRSYKQRSSLEEHKERC). Lys-245 participates in a covalent cross-link: Glycyl lysine isopeptide (Lys-Gly) (interchain with G-Cter in SUMO2). The residue at position 326 (Thr-326) is a Phosphothreonine. The tract at residues 364–394 (IHLPEKSVPSERGLSPNNSGHDSTDTDSNHE) is disordered. Ser-378 is subject to Phosphoserine. Positions 385–394 (DSTDTDSNHE) are enriched in basic and acidic residues. A C2H2-type 5 zinc finger spans residues 452–474 (YRCDHCRVLFLDYVMFTIHMGCH). A mediates homodimerization and heterodimerization region spans residues 452–504 (YRCDHCRVLFLDYVMFTIHMGCHGFRDPFECNMCGYRSHDRYEFSSHIARGEH). The segment at 480 to 504 (FECNMCGYRSHDRYEFSSHIARGEH) adopts a C2H2-type 6; atypical zinc-finger fold.

Belongs to the Ikaros C2H2-type zinc-finger protein family. In terms of assembly, homodimer. Heterodimer with other IKAROS family members. Interacts with IKZF4 and IKZF5. Interacts with IKZF1. Interacts with HRAS. Interacts with FOXP3; this interaction may be required for silencing target genes and regulating the suppressive activity of FOXP3-positive regulatory T-cells (Treg). Interacts with BCL21L isoform Bcl-X(L); this interaction blocks the anti-apoptotic role of BCL21L. Associates with histone deacetylase complexes containing HDAC1, MTA2 and SIN3A. In terms of processing, phosphorylation on tyrosine residues induced by IL2 is required for dissociation from HRAS and nuclear translocation of IKZF3 in T-cells. Phosphorylation on tyrosine residues induced by IL4 is required for dissociation from Bcl-X(L) in T-cells. As to expression, expressed most strongly in peripheral blood leukocytes, the spleen, and the thymus.

The protein resides in the nucleus. Its subcellular location is the cytoplasm. In terms of biological role, transcription factor that plays an important role in the regulation of lymphocyte differentiation. Plays an essential role in regulation of B-cell differentiation, proliferation and maturation to an effector state. Involved in regulating BCL2 expression and controlling apoptosis in T-cells in an IL2-dependent manner. The sequence is that of Zinc finger protein Aiolos (IKZF3) from Homo sapiens (Human).